The chain runs to 1099 residues: Zinc finger protein basonuclin-2 (1099 aa).

Residues 45–66 (EEAEVDVRERETQRDREPKRAR) form a disordered region. The segment covering 49–66 (VDVRERETQRDREPKRAR) has biased composition (basic and acidic residues). K277 participates in a covalent cross-link: Glycyl lysine isopeptide (Lys-Gly) (interchain with G-Cter in SUMO2). The interval 357–385 (LSTQNEYNESSESEVSPTPYKNDQTPNRN) is disordered. Residues 361–372 (NEYNESSESEVS) show a composition bias toward low complexity. The span at 375–385 (PYKNDQTPNRN) shows a compositional bias: polar residues. Residues K396, K416, and K421 each participate in a glycyl lysine isopeptide (Lys-Gly) (interchain with G-Cter in SUMO2) cross-link. Residues 397–423 (TEPACVSPIQNSAPVSDLTKTEHPKSS) form a disordered region. The C2H2-type 1 zinc-finger motif lies at 441–464 (VFCNACGKTFYDKGTLKIHYNAVH). S561 carries the phosphoserine modification. Disordered stretches follow at residues 622-641 (EPSADLAPKKKPRKSSMPVK) and 648-742 (DTAD…EGDE). K641 is covalently cross-linked (Glycyl lysine isopeptide (Lys-Gly) (interchain with G-Cter in SUMO2)). Residues 648 to 661 (DTADEFDDEDDDPN) show a composition bias toward acidic residues. 2 stretches are compositionally biased toward basic and acidic residues: residues 670 to 680 (MSHDNHCHSQE) and 719 to 742 (ERDYENESESSEPKLGEESMEGDE). A C2H2-type 2 zinc finger spans residues 833–856 (KICYVCKKSFKSSYSVKLHYRNVH). Glycyl lysine isopeptide (Lys-Gly) (interchain with G-Cter in SUMO2) cross-links involve residues K894 and K919. Disordered regions lie at residues 929 to 948 (LDVREDASSPAGTEDSHLNG) and 968 to 1008 (LQSS…KAEA). Acidic residues predominate over residues 982–995 (AGSDEGILLDDIDG). C2H2-type zinc fingers lie at residues 1035–1058 (IMCNICHKMYSNKGTLRVHYKTVH) and 1063–1090 (HKCKVPGCNMMFSSVRSRNRHSQNPNLH). The disordered stretch occupies residues 1079–1099 (SRNRHSQNPNLHKNIPFTSVD).

Highly expressed in testis, uterus and small intestine, and weakly expressed in colon and prostate. Also expressed in skin, primary keratinocytes, immortalized keratinocytes, and HeLa and HEK293 cells. Not detected in blood, thymus, spleen or Hep-G2 cells.

It localises to the nucleus. Its function is as follows. Probable transcription factor specific for skin keratinocytes. May play a role in the differentiation of spermatozoa and oocytes. May also play an important role in early urinary-tract development. This Homo sapiens (Human) protein is Zinc finger protein basonuclin-2.